Reading from the N-terminus, the 1036-residue chain is Beta-galactosidase (1036 aa).

Substrate is bound by residues N97 and D197. D197 is a binding site for Na(+). Mg(2+) contacts are provided by E411, H413, and E456. Residues E456 and 532–535 (EYAH) contribute to the substrate site. E456 acts as the Proton donor in catalysis. E532 acts as the Nucleophile in catalysis. Residue N592 coordinates Mg(2+). Residues F596 and D599 each contribute to the Na(+) site. Substrate contacts are provided by D599 and W1006.

This sequence belongs to the glycosyl hydrolase 2 family. In terms of assembly, homotetramer. It depends on Mg(2+) as a cofactor. The cofactor is Na(+).

The catalysed reaction is Hydrolysis of terminal non-reducing beta-D-galactose residues in beta-D-galactosides.. The protein is Beta-galactosidase of Leuconostoc mesenteroides subsp. mesenteroides (strain ATCC 8293 / DSM 20343 / BCRC 11652 / CCM 1803 / JCM 6124 / NCDO 523 / NBRC 100496 / NCIMB 8023 / NCTC 12954 / NRRL B-1118 / 37Y).